The chain runs to 262 residues: Ribosomal RNA small subunit methyltransferase A (262 aa).

S-adenosyl-L-methionine contacts are provided by histidine 16, leucine 18, glycine 43, glutamate 64, aspartate 89, and asparagine 109.

The protein belongs to the class I-like SAM-binding methyltransferase superfamily. rRNA adenine N(6)-methyltransferase family. RsmA subfamily.

The protein localises to the cytoplasm. The catalysed reaction is adenosine(1518)/adenosine(1519) in 16S rRNA + 4 S-adenosyl-L-methionine = N(6)-dimethyladenosine(1518)/N(6)-dimethyladenosine(1519) in 16S rRNA + 4 S-adenosyl-L-homocysteine + 4 H(+). Functionally, specifically dimethylates two adjacent adenosines (A1518 and A1519) in the loop of a conserved hairpin near the 3'-end of 16S rRNA in the 30S particle. May play a critical role in biogenesis of 30S subunits. This chain is Ribosomal RNA small subunit methyltransferase A, found in Xanthomonas euvesicatoria pv. vesicatoria (strain 85-10) (Xanthomonas campestris pv. vesicatoria).